We begin with the raw amino-acid sequence, 569 residues long: Peroxynitrite isomerase THAP4 (569 aa).

The THAP-type zinc-finger motif lies at 1–85; that stretch reads MVICCAAVNC…LKPTAVPSIF (85 aa). The segment at 83 to 219 is disordered; that stretch reads SIFHLSEKKR…GISMDDFTPP (137 aa). Residues 121 to 130 show a composition bias toward polar residues; the sequence is IGSSLSSSDN. Position 159 is a phosphoserine (serine 159). Residues 196–210 are compositionally biased toward low complexity; that stretch reads ASSSAADAGGADKSG. The HCFC1-binding motif (HBM) motif lies at 230-233; the sequence is LHSY. Serine 234 bears the Phosphoserine mark. The tract at residues 235–312 is disordered; that stretch reads FSSKHTRERP…EAVQSEHSDA (78 aa). A compositionally biased stretch (basic and acidic residues) spans 242-262; that stretch reads ERPSVPREPMDRKRLKRDIEP. A compositionally biased stretch (polar residues) spans 265–279; the sequence is SGNSVAQSPPSSSLT. Over residues 280 to 289 the composition is skewed to low complexity; sequence ATPQKASQSP. The segment at 407–569 is nitrobindin; that stretch reads PPKLNPVVEP…LHITYKKVTP (163 aa). 2 residues coordinate heme b: threonine 436 and histidine 559.

This sequence in the C-terminal section; belongs to the nitrobindin family. Homodimer. It depends on heme b as a cofactor.

The protein resides in the cytoplasm. It localises to the nucleus. It carries out the reaction peroxynitrite = nitrate. It participates in nitrogen metabolism. In terms of biological role, heme-binding protein able to scavenge peroxynitrite and to protect free L-tyrosine against peroxynitrite-mediated nitration, by acting as a peroxynitrite isomerase that converts peroxynitrite to nitrate. Therefore, this protein likely plays a role in peroxynitrite sensing and in the detoxification of reactive nitrogen and oxygen species (RNS and ROS, respectively). Is able to bind nitric oxide (NO) in vitro, but may act as a sensor of peroxynitrite levels in vivo, possibly modulating the transcriptional activity residing in the N-terminal region. This is Peroxynitrite isomerase THAP4 from Rattus norvegicus (Rat).